The sequence spans 616 residues: MITWHDLYTVLTAVVPLYVAMILAYGSVQWWKIFSPDQCSGINRFVAIFAVPLLSFHFISTNDPYAMNFRFVAADTLQKIIMLVLLALWANLTKNGSLEWMITIFSLSTLPNTLVMGIPLLIAMYGTYAGSLMVQVVVLQCIIWYTLLLFLFEYRGAKLLIMEQFPETGASIVSFKVESDVVSLDGHDFLETDAEIGNDGKLHVTVRKSNASRRSLMMTPRPSNLTGAEIYSLSSTPRGSNFNHSDFYSVMGFPGGRLSNFGPADLYSVQSSRGPTPRPSNFEENNAVKYGFYNNTNSSVPAAGSYPAPNPEFSTGTGVSTKPNKIPKENQQQLQEKDSKASHDAKELHMFVWSSSASPVSDVFGGGAGDNVATEQSEQGAKEIRMVVSDQPRKSNARGGGDDIGGLDSGEGEREIEKATAGLNKMGSNSTAELEAAGGDGGGNNGTHMPPTSVMTRLILIMVWRKLIRNPNTYSSLIGLIWALVAYRWHVAMPKILQQSISILSDAGLGMAMFSLGLFMALQPKIIACGNSVATFAMAVRFITGPAIMAVAGIAIGLHGDLLRIAIVQAALPQGIVPFVFAKEYNVHPTILSTGVIFGMLIALPITLVYYILLGL.

At 1-7 the chain is on the extracellular side; the sequence is MITWHDL. A helical membrane pass occupies residues 8 to 28; the sequence is YTVLTAVVPLYVAMILAYGSV. At 29-38 the chain is on the cytoplasmic side; it reads QWWKIFSPDQ. The chain crosses the membrane as a helical span at residues 39-59; the sequence is CSGINRFVAIFAVPLLSFHFI. V51 provides a ligand contact to (indol-3-yl)acetate. Residues 60 to 70 lie on the Extracellular side of the membrane; that stretch reads STNDPYAMNFR. A helical transmembrane segment spans residues 71–91; the sequence is FVAADTLQKIIMLVLLALWAN. Residues 92–101 are Cytoplasmic-facing; sequence LTKNGSLEWM. The helical transmembrane segment at 102–122 threads the bilayer; it reads ITIFSLSTLPNTLVMGIPLLI. Residues N112 and L114 each coordinate (indol-3-yl)acetate. At 123 to 131 the chain is on the extracellular side; that stretch reads AMYGTYAGS. The helical transmembrane segment at 132-152 threads the bilayer; sequence LMVQVVVLQCIIWYTLLLFLF. Residue Y145 coordinates (indol-3-yl)acetate. Topologically, residues 153–476 are cytoplasmic; it reads EYRGAKLLIM…LIRNPNTYSS (324 aa). S223, S240, and S280 each carry phosphoserine. Residues 302-343 are disordered; sequence AAGSYPAPNPEFSTGTGVSTKPNKIPKENQQQLQEKDSKASH. Polar residues predominate over residues 312–334; the sequence is EFSTGTGVSTKPNKIPKENQQQL. Phosphoserine is present on residues S358 and S395. A disordered region spans residues 390–411; that stretch reads DQPRKSNARGGGDDIGGLDSGE. The span at 398-409 shows a compositional bias: gly residues; sequence RGGGDDIGGLDS. The helical transmembrane segment at 477-497 threads the bilayer; it reads LIGLIWALVAYRWHVAMPKIL. Residues 498–500 are Extracellular-facing; it reads QQS. A helical transmembrane segment spans residues 501 to 521; it reads ISILSDAGLGMAMFSLGLFMA. The Cytoplasmic segment spans residues 522-535; that stretch reads LQPKIIACGNSVAT. Residues 536–556 form a helical membrane-spanning segment; that stretch reads FAMAVRFITGPAIMAVAGIAI. Over 557-561 the chain is Extracellular; it reads GLHGD. The helical transmembrane segment at 562-582 threads the bilayer; that stretch reads LLRIAIVQAALPQGIVPFVFA. Positions 576 and 577 each coordinate (indol-3-yl)acetate. Residues 583 to 595 are Cytoplasmic-facing; it reads KEYNVHPTILSTG. A helical transmembrane segment spans residues 596–616; the sequence is VIFGMLIALPITLVYYILLGL.

This sequence belongs to the auxin efflux carrier (TC 2.A.69.1) family. As to quaternary structure, homodimer. Expressed in the quiescent center precursors and surrounding cells. Present in columella cells of primary roots. Detected in pollen.

It localises to the cell membrane. In terms of biological role, acts as a component of the auxin efflux carrier. Plays a role in generating a sink for auxin into columella cells. Maintains the endogenous auxin gradient, which is essential for correct root patterning. Involved in EXO70A3-regulated gravitropic responses in columella cells and in root system architecture (RSA). Together with PIN3 and PIN7, involved in the connective auxin transport (CAT) that ensures communication across the shoot system, and modulates strigolactone-mediated shoot branching control. The abcb19 pin3 pin4 pin7 quadruple mutant exhibits an additive phenotype on strigolactone-mediated bud outgrowth responses and shoot branching control. This chain is Auxin efflux carrier component 4, found in Arabidopsis thaliana (Mouse-ear cress).